Consider the following 305-residue polypeptide: Ribosomal protein L11 methyltransferase (305 aa).

Residues T155, G176, D198, and N241 each coordinate S-adenosyl-L-methionine.

It belongs to the methyltransferase superfamily. PrmA family.

Its subcellular location is the cytoplasm. It carries out the reaction L-lysyl-[protein] + 3 S-adenosyl-L-methionine = N(6),N(6),N(6)-trimethyl-L-lysyl-[protein] + 3 S-adenosyl-L-homocysteine + 3 H(+). In terms of biological role, methylates ribosomal protein L11. The sequence is that of Ribosomal protein L11 methyltransferase from Carboxydothermus hydrogenoformans (strain ATCC BAA-161 / DSM 6008 / Z-2901).